A 482-amino-acid polypeptide reads, in one-letter code: ATP synthase subunit beta (482 aa).

Position 162-169 (162-169 (GGAGVGKT)) interacts with ATP.

This sequence belongs to the ATPase alpha/beta chains family. In terms of assembly, F-type ATPases have 2 components, CF(1) - the catalytic core - and CF(0) - the membrane proton channel. CF(1) has five subunits: alpha(3), beta(3), gamma(1), delta(1), epsilon(1). CF(0) has four main subunits: a(1), b(1), b'(1) and c(9-12).

Its subcellular location is the cellular thylakoid membrane. It catalyses the reaction ATP + H2O + 4 H(+)(in) = ADP + phosphate + 5 H(+)(out). Its function is as follows. Produces ATP from ADP in the presence of a proton gradient across the membrane. The catalytic sites are hosted primarily by the beta subunits. The sequence is that of ATP synthase subunit beta from Trichormus variabilis (strain ATCC 29413 / PCC 7937) (Anabaena variabilis).